Reading from the N-terminus, the 245-residue chain is Uridylate kinase (245 aa).

Position 13 to 16 (13 to 16) interacts with ATP; sequence KLSG. UMP is bound at residue glycine 56. ATP is bound by residues glycine 57 and arginine 61. UMP contacts are provided by residues aspartate 76 and 138–145; that span reads TGRPFFTT. ATP is bound by residues asparagine 166, tyrosine 172, and aspartate 175.

Belongs to the UMP kinase family. In terms of assembly, homohexamer.

It is found in the cytoplasm. The enzyme catalyses UMP + ATP = UDP + ADP. The protein operates within pyrimidine metabolism; CTP biosynthesis via de novo pathway; UDP from UMP (UMPK route): step 1/1. Its activity is regulated as follows. Inhibited by UTP. Catalyzes the reversible phosphorylation of UMP to UDP. This chain is Uridylate kinase, found in Mycoplasma mobile (strain ATCC 43663 / 163K / NCTC 11711) (Mesomycoplasma mobile).